A 305-amino-acid polypeptide reads, in one-letter code: Virulence plasmid integrase pGP7-D (305 aa).

In terms of domain architecture, Core-binding (CB) spans 13–99; that stretch reads LTFGEASEIW…CYISFTKFLY (87 aa). Residues 127–303 enclose the Tyr recombinase domain; the sequence is VKTVSISKKE…GNSSVANIPT (177 aa). Catalysis depends on residues K188 and R257. Y289 (O-(3'-phospho-DNA)-tyrosine intermediate) is an active-site residue.

It belongs to the 'phage' integrase family.

The chain is Virulence plasmid integrase pGP7-D from Chlamydia muridarum (strain MoPn / Nigg).